We begin with the raw amino-acid sequence, 140 residues long: MQKSTPPEDLSRLTLLGREAKPSRKLETFPNRHPDRDYIVTMETAEFTCVCPMTGQPDFADLHISYIPDASILESKSLKLYLWSYRNEGIFHEHVTNVILEDVVAALSPRWCKVTANFGVRGGISITVEAEYKKPGWSKP.

Residue Cys-51 is the Thioimide intermediate of the active site. The Proton donor role is filled by Asp-58. Residues 73 to 75 and 92 to 93 contribute to the substrate site; these read LES and HE.

Belongs to the GTP cyclohydrolase I family. QueF type 1 subfamily.

Its subcellular location is the cytoplasm. The enzyme catalyses 7-aminomethyl-7-carbaguanine + 2 NADP(+) = 7-cyano-7-deazaguanine + 2 NADPH + 3 H(+). It functions in the pathway tRNA modification; tRNA-queuosine biosynthesis. Its function is as follows. Catalyzes the NADPH-dependent reduction of 7-cyano-7-deazaguanine (preQ0) to 7-aminomethyl-7-deazaguanine (preQ1). The sequence is that of NADPH-dependent 7-cyano-7-deazaguanine reductase from Syntrophus aciditrophicus (strain SB).